We begin with the raw amino-acid sequence, 778 residues long: Lon protease (778 aa).

In terms of domain architecture, Lon N-terminal spans 4 to 187 (LPVLPLTDAV…LLVGWVRAHL (184 aa)). 346 to 353 (GPPGVGKT) is a binding site for ATP. Residues 581 to 762 (TAVPGVATGL…ADVLALALRP (182 aa)) enclose the Lon proteolytic domain. Active-site residues include serine 668 and lysine 711.

It belongs to the peptidase S16 family. As to quaternary structure, homohexamer. Organized in a ring with a central cavity.

The protein localises to the cytoplasm. It carries out the reaction Hydrolysis of proteins in presence of ATP.. Functionally, ATP-dependent serine protease that mediates the selective degradation of mutant and abnormal proteins as well as certain short-lived regulatory proteins. Required for cellular homeostasis and for survival from DNA damage and developmental changes induced by stress. Degrades polypeptides processively to yield small peptide fragments that are 5 to 10 amino acids long. Binds to DNA in a double-stranded, site-specific manner. The protein is Lon protease of Salinispora arenicola (strain CNS-205).